The chain runs to 338 residues: MKSVAINGYGTIGKRVADAVAAQDDMKVIGVSKTRPNYESRTAVEEKGYDLYIGIPERADQFKEAGIEIAGTVEDMIQEADVVVDCTPGTIGPQNLEMYKKAGVKAIYQGGEDHELTGLSFNAISNYDDSYGKDYTRVVSCNTTGLTRTLSTIDPIADIKKVRAVMVRRGSDPSEVKKGPINSIVPNPPKVPSHHGPDVKTVMEGIDVTTMALLVPTTLMHQHNIMVEINNEVETQEIIDALEKRSRVLVVDASEGLGSTAELMEYAKELGRNRNDLYEIPVWRESINVVGNELYYMQAVHQESDVVPENIDAIRALLEMESDNEKSIAKTNKAMGIL.

Residues 11 to 12 (TI) and Gly-111 each bind NAD(+). D-glyceraldehyde 3-phosphate is bound at residue 140–142 (SCN). Residue Cys-141 is the Nucleophile of the active site. Residue Arg-169 participates in NAD(+) binding. The interval 170–195 (GSDPSEVKKGPINSIVPNPPKVPSHH) is disordered. 195-196 (HG) is a D-glyceraldehyde 3-phosphate binding site. NAD(+) is bound at residue Gln-302.

This sequence belongs to the glyceraldehyde-3-phosphate dehydrogenase family. Homotetramer.

It is found in the cytoplasm. The catalysed reaction is D-glyceraldehyde 3-phosphate + phosphate + NADP(+) = (2R)-3-phospho-glyceroyl phosphate + NADPH + H(+). It catalyses the reaction D-glyceraldehyde 3-phosphate + phosphate + NAD(+) = (2R)-3-phospho-glyceroyl phosphate + NADH + H(+). It participates in carbohydrate degradation; glycolysis; pyruvate from D-glyceraldehyde 3-phosphate: step 1/5. In Methanobrevibacter smithii (strain ATCC 35061 / DSM 861 / OCM 144 / PS), this protein is Glyceraldehyde-3-phosphate dehydrogenase.